The sequence spans 355 residues: 3-isopropylmalate dehydrogenase (355 aa).

Substrate-binding residues include Arg98, Arg108, Arg132, and Asp223. 3 residues coordinate Mg(2+): Asp223, Asp247, and Asp251. 283 to 295 lines the NAD(+) pocket; the sequence is GSAPDIAGQQKAD.

Belongs to the isocitrate and isopropylmalate dehydrogenases family. LeuB type 2 subfamily. Homodimer. It depends on Mg(2+) as a cofactor. The cofactor is Mn(2+).

It is found in the cytoplasm. The catalysed reaction is (2R,3S)-3-isopropylmalate + NAD(+) = 4-methyl-2-oxopentanoate + CO2 + NADH. The protein operates within amino-acid biosynthesis; L-leucine biosynthesis; L-leucine from 3-methyl-2-oxobutanoate: step 3/4. Its function is as follows. Catalyzes the oxidation of 3-carboxy-2-hydroxy-4-methylpentanoate (3-isopropylmalate) to 3-carboxy-4-methyl-2-oxopentanoate. The product decarboxylates to 4-methyl-2 oxopentanoate. The sequence is that of 3-isopropylmalate dehydrogenase from Clavibacter michiganensis subsp. michiganensis (strain NCPPB 382).